The following is a 183-amino-acid chain: UPF0398 protein LSL_0930 (183 aa).

It belongs to the UPF0398 family.

This Ligilactobacillus salivarius (strain UCC118) (Lactobacillus salivarius) protein is UPF0398 protein LSL_0930.